The following is an 810-amino-acid chain: MDNIISGQAQKVEDVDGTRVQNEFSKFLKSFKGDKNELQYKTAMKELVQPEKNTIFVDMQHLYKFSNNLATTIELQYYRVYPFMCEALHLATLDGCDENERQQMFKKQLYVSLYNLDAKTKVRELSADKVGGLVRIAGQIVRTHPVHPELSRACFVCEDCGVSTRDVQQQFRYTQPTKCANPQCMNRTRFSLDVNSSTFVDFQKIRIQETQAELPRGSIPRTVDVIVRGEMVETVQPGDKCDIVGTLIVIPDIAQLSTPGLRAETSNQNRGRATDKSEGITGLKALGVRDLTYKMAFLACHIQQTESLVGGDASGAMEENDYLELWTKMSPEDRSVLKQMSDDKKIEKNIVDSLFPNIYGNHEVKLGVLLMLLGGVAKKSKDEGTSLRGDINVCLVGDPSTAKSQVLKAVEEFSPRAIYTSGKASSAAGLTAAVVKDEESFEFVIEAGALMLADNGVCCIDEFDKMDVKDQVAIHEAMEQQTISITKAGVKATLNARASILAAANPVGGRYDRSRPLKYNVQMSAPIMSRFDLFFVLVDECNEVTDYAIARRILDNHRSISEHTERNTVYKIDDIKKYIAFARCFKPKISDKAAEALVREYKKLRMSDSNNAATSSWRITVRQLESLVRLSEALARLHCGKEVLEQHVEKAAELLNKSIVRVEQPDIALDEDDFDNNIVIVEANKENQGGDDDMEHDGEKDETAKVDPAKLKISFKEYKQLSDVLVLHMRADEESQGEEEYDGVKQSALVEWYLTTIEGEMETEEDFNVQKTVCERVIHRLVHQDHILLEVEPGEDPTLCVHPNYVVSDE.

The MCM domain maps to 346 to 553 (IEKNIVDSLF…VTDYAIARRI (208 aa)). Positions 400, 401, 402, 403, 404, and 505 each coordinate ATP. Positions 529 to 532 (SRFD) match the Arginine finger motif. Residues Arg622 and Glu625 each coordinate ADP. A disordered region spans residues 685 to 705 (KENQGGDDDMEHDGEKDETAK).

It belongs to the MCM family. In terms of assembly, component of the mcm2-7 complex. The complex forms a toroidal hexameric ring with the proposed subunit order mcm2-mcm6-mcm4-mcm7-mcm3-mcm5 (By simililarity).

It is found in the nucleus. It catalyses the reaction ATP + H2O = ADP + phosphate + H(+). Acts as a component of the MCM2-7 complex (MCM complex) which is the replicative helicase essential for 'once per cell cycle' DNA replication initiation and elongation in eukaryotic cells. Core component of CDC45-MCM-GINS (CMG) helicase, the molecular machine that unwinds template DNA during replication, and around which the replisome is built. The active ATPase sites in the MCM2-7 ring are formed through the interaction surfaces of two neighboring subunits such that a critical structure of a conserved arginine finger motif is provided in trans relative to the ATP-binding site of the Walker A box of the adjacent subunit. The six ATPase active sites, however, are likely to contribute differentially to the complex helicase activity. The protein is DNA replication licensing factor mcm-6 of Caenorhabditis briggsae.